The sequence spans 470 residues: MAQVTGKTLYEKVWDSHIVASPEGEAPVVYVDRHLVHEVTSPQAFSGLKVAGRKLRAPQKTFATMDHNTSTRSASLDALSPMARTQVETLAQNCKEFGVRLYDIHHPNQGIVHVMGPELGITLPGTVIVCGDSHTATHGAFGALAFGIGTSEVEHVLATQTLRQLKAKNMKVEVRGKVTDGVTAKDIVLAIIGKLGMDGGTGYVVEFCGEAIEALTMEGRMTLCNMAIEMGAKAGMVAPDETTFNYLKGREFAPKDAMWEQAVAAWSELKSDADAVFDVEVVLDANDIAPQLTWGTNPGQVVAIDGVVPNPETETNSTNRTSMIKALEYIGLTPGTKMTDISINKVFIGSCTNSRIEDLRSAAVHAKNRKVAEGVVAIVVPGSGQVKLQAEEEGLDKIFIEAGFEWRLPGCSMCLAMNDDRLDAGDRCASTSNRNFEGRQGRGSRTHLVSPAMAAAAAVAGHFVDIRKPY.

3 residues coordinate [4Fe-4S] cluster: C351, C411, and C414.

The protein belongs to the aconitase/IPM isomerase family. LeuC type 1 subfamily. In terms of assembly, heterodimer of LeuC and LeuD. [4Fe-4S] cluster is required as a cofactor.

It carries out the reaction (2R,3S)-3-isopropylmalate = (2S)-2-isopropylmalate. It functions in the pathway amino-acid biosynthesis; L-leucine biosynthesis; L-leucine from 3-methyl-2-oxobutanoate: step 2/4. Catalyzes the isomerization between 2-isopropylmalate and 3-isopropylmalate, via the formation of 2-isopropylmaleate. This is 3-isopropylmalate dehydratase large subunit from Shewanella frigidimarina (strain NCIMB 400).